The following is a 280-amino-acid chain: Fructose-1,6-bisphosphatase/inositol-1-monophosphatase (280 aa).

Residues glutamate 73, aspartate 94, leucine 96, and aspartate 97 each coordinate Mg(2+). Residues 97-99 (DGT), arginine 195, valine 200, and arginine 219 each bind substrate. Residue aspartate 226 participates in Mg(2+) binding.

The protein belongs to the inositol monophosphatase superfamily. FBPase class 4 family. The cofactor is Mg(2+).

It carries out the reaction beta-D-fructose 1,6-bisphosphate + H2O = beta-D-fructose 6-phosphate + phosphate. It catalyses the reaction a myo-inositol phosphate + H2O = myo-inositol + phosphate. Functionally, phosphatase with broad specificity; it can dephosphorylate fructose 1,6-bisphosphate, and both D and L isomers of inositol-1-phosphate (I-1-P). The chain is Fructose-1,6-bisphosphatase/inositol-1-monophosphatase (suhB) from Methanothermobacter thermautotrophicus (strain ATCC 29096 / DSM 1053 / JCM 10044 / NBRC 100330 / Delta H) (Methanobacterium thermoautotrophicum).